The primary structure comprises 167 residues: LIM domain transcription factor LMO4.1 (167 aa).

Over residues 1-17 (MVNNRVTESTTTAVSSN) the composition is skewed to polar residues. A disordered region spans residues 1–20 (MVNNRVTESTTTAVSSNGGP). LIM zinc-binding domains follow at residues 22–84 (KACA…LFGS) and 86–148 (GACS…GLLS).

In terms of biological role, acts as a positive cofactor of GATA transcription factors to establish the identity of the ventral mesoderm during gastrulation. Down-regulation in the dorsal mesoderm is necessary for the proper formation of this territory since, when present, lmo4 may bind ldb1 and restrict the availability of this cofactor for Spemman organizer transcription factors. At neurula stages, suppresses primary neuron differentiation and modulates gene expression at the Isthmic Organizer of the midbrain-hindbrain boundary. The polypeptide is LIM domain transcription factor LMO4.1 (lmo4.1) (Xenopus tropicalis (Western clawed frog)).